We begin with the raw amino-acid sequence, 466 residues long: Membrane-bound lytic murein transglycosylase F (466 aa).

An N-terminal signal peptide occupies residues 1–24 (MKRFKLNYFIIGLIAILLTWSLWT). Residues 25–268 (TVPWRNAHQD…RLEEKYLGHV (244 aa)) form a non-LT domain region. The interval 269-466 (GGFDYVDTKT…KEKKAAQLAD (198 aa)) is LT domain. The active site involves E313.

The protein in the N-terminal section; belongs to the bacterial solute-binding protein 3 family. It in the C-terminal section; belongs to the transglycosylase Slt family.

The protein localises to the cell outer membrane. The catalysed reaction is Exolytic cleavage of the (1-&gt;4)-beta-glycosidic linkage between N-acetylmuramic acid (MurNAc) and N-acetylglucosamine (GlcNAc) residues in peptidoglycan, from either the reducing or the non-reducing ends of the peptidoglycan chains, with concomitant formation of a 1,6-anhydrobond in the MurNAc residue.. Its function is as follows. Murein-degrading enzyme that degrades murein glycan strands and insoluble, high-molecular weight murein sacculi, with the concomitant formation of a 1,6-anhydromuramoyl product. Lytic transglycosylases (LTs) play an integral role in the metabolism of the peptidoglycan (PG) sacculus. Their lytic action creates space within the PG sacculus to allow for its expansion as well as for the insertion of various structures such as secretion systems and flagella. The polypeptide is Membrane-bound lytic murein transglycosylase F (Sodalis glossinidius (strain morsitans)).